Here is a 141-residue protein sequence, read N- to C-terminus: Nucleoside diphosphate kinase (141 aa).

ATP is bound by residues lysine 10, phenylalanine 58, arginine 86, threonine 92, arginine 103, and asparagine 113. Histidine 116 serves as the catalytic Pros-phosphohistidine intermediate.

The protein belongs to the NDK family. Homotetramer. The cofactor is Mg(2+).

The protein localises to the cytoplasm. The catalysed reaction is a 2'-deoxyribonucleoside 5'-diphosphate + ATP = a 2'-deoxyribonucleoside 5'-triphosphate + ADP. The enzyme catalyses a ribonucleoside 5'-diphosphate + ATP = a ribonucleoside 5'-triphosphate + ADP. Major role in the synthesis of nucleoside triphosphates other than ATP. The ATP gamma phosphate is transferred to the NDP beta phosphate via a ping-pong mechanism, using a phosphorylated active-site intermediate. The sequence is that of Nucleoside diphosphate kinase from Ehrlichia canis (strain Jake).